A 456-amino-acid chain; its full sequence is MDKLNKITVPASQKLRQLQKMVHDIKNNEGGIMNKIKKLKVKAPPSVPRRDYASESPADEEEQWSDDFDSDYENPDEHSDSEMYVMPAEENADDSYEPPPVEQETRPVHPALPFARGEYIDNRSSQRHSPPFSKTLPSKPSWPSEKARLTSTLPALTALQKPQVPPKPKGLLEDEADYVVPVEDNDENYIHPTESSSPPPEKAPMVNRSTKPNSSTPASPPGTASGRNSGAWETKSPPPAAPSPLPRAGKKPTTPLKTTPVASQQNASSVCEEKPIPAERHRGSSHRQEAVQSPVFPPAQKQIHQKPIPLPRFTEGGNPTVDGPLPSFSSNSTISEQEAGVLCKPWYAGACDRKSAEEALHRSNKDGSFLIRKSSGHDSKQPYTLVVFFNKRVYNIPVRFIEATKQYALGRKKNGEEYFGSVAEIIRNHQHSPLVLIDSQNNTKDSTRLKYAVKVS.

The segment at 36 to 301 (IKKLKVKAPP…QSPVFPPAQK (266 aa)) is disordered. The span at 57-74 (PADEEEQWSDDFDSDYEN) shows a compositional bias: acidic residues. A phosphotyrosine; by SYK mark is found at Tyr72, Tyr84, Tyr96, Tyr178, and Tyr189. Positions 173-187 (EDEADYVVPVEDNDE) are enriched in acidic residues. Positions 212 to 226 (PNSSTPASPPGTASG) are enriched in low complexity. Positions 236–245 (SPPPAAPSPL) are enriched in pro residues. A compositionally biased stretch (low complexity) spans 251-260 (KPTTPLKTTP). Residues 271–289 (CEEKPIPAERHRGSSHRQE) are compositionally biased toward basic and acidic residues. The SH2 domain occupies 346–453 (WYAGACDRKS…KDSTRLKYAV (108 aa)).

In terms of assembly, associates with PLCG1, VAV1 and NCK1 in a B-cell antigen receptor-dependent fashion. Interacts with VAV3, PLCG2 and GRB2. Interacts through its SH2 domain with CD79A. Interacts (via SH2 domain) with SYK; phosphorylated and activated by SYK. Interacts (via SH2 domain) with SCIMP; this interaction is dependent on phosphorylation of SCIMP 'Tyr-131'. Following BCR activation, phosphorylated on tyrosine residues by SYK and LYN. When phosphorylated, serves as a scaffold to assemble downstream targets of antigen activation, including PLCG1, VAV1, GRB2 and NCK1. Phosphorylation of Tyr-84, Tyr-178 and Tyr-189 facilitates PLCG1 binding. Phosphorylation of Tyr-96 facilitates BTK binding. Phosphorylation of Tyr-72 facilitates VAV1 and NCK1 binding. Phosphorylation is required for both Ca(2+) and MAPK signaling pathways. Expressed in B-cell lineage and fibroblast cell lines (at protein level). Highest levels of expression in the spleen, with lower levels in the liver, kidney, pancreas, small intestines and colon.

Its subcellular location is the cytoplasm. It localises to the cell membrane. In terms of biological role, functions as a central linker protein, downstream of the B-cell receptor (BCR), bridging the SYK kinase to a multitude of signaling pathways and regulating biological outcomes of B-cell function and development. Plays a role in the activation of ERK/EPHB2, MAP kinase p38 and JNK. Modulates AP1 activation. Important for the activation of NF-kappa-B and NFAT. Plays an important role in BCR-mediated PLCG1 and PLCG2 activation and Ca(2+) mobilization and is required for trafficking of the BCR to late endosomes. However, does not seem to be required for pre-BCR-mediated activation of MAP kinase and phosphatidyl-inositol 3 (PI3) kinase signaling. May be required for the RAC1-JNK pathway. Plays a critical role in orchestrating the pro-B cell to pre-B cell transition. May play an important role in BCR-induced B-cell apoptosis. The sequence is that of B-cell linker protein (BLNK) from Homo sapiens (Human).